We begin with the raw amino-acid sequence, 177 residues long: Large ribosomal subunit protein uL6 (177 aa).

It belongs to the universal ribosomal protein uL6 family. In terms of assembly, part of the 50S ribosomal subunit.

Functionally, this protein binds to the 23S rRNA, and is important in its secondary structure. It is located near the subunit interface in the base of the L7/L12 stalk, and near the tRNA binding site of the peptidyltransferase center. The protein is Large ribosomal subunit protein uL6 of Afipia carboxidovorans (strain ATCC 49405 / DSM 1227 / KCTC 32145 / OM5) (Oligotropha carboxidovorans).